The primary structure comprises 108 residues: UPF0060 membrane protein YnfA (108 aa).

The Periplasmic segment spans residues 1-5; sequence MLKTT. A helical membrane pass occupies residues 6 to 26; that stretch reads LLFFVTALCEIIGCFLPWLWI. Residues 27–30 are Cytoplasmic-facing; the sequence is KRGA. The chain crosses the membrane as a helical span at residues 31–51; it reads SVWWLLPAAASLALFVWLLTL. The Periplasmic portion of the chain corresponds to 52–60; that stretch reads HPAASGRVY. A helical transmembrane segment spans residues 61–81; the sequence is AAYGGVYVCTALLWLRVVDGV. At 82 to 84 the chain is on the cytoplasmic side; that stretch reads RLT. A helical transmembrane segment spans residues 85–105; the sequence is VYDWSGALIALCGMLIIVVGW. Over 106–108 the chain is Periplasmic; the sequence is GRT.

This sequence belongs to the UPF0060 family.

The protein localises to the cell inner membrane. The polypeptide is UPF0060 membrane protein YnfA (Salmonella typhi).